The primary structure comprises 715 residues: Fatty acid oxidation complex subunit alpha (715 aa).

Residues 1 to 190 (MIYEGKAITV…KVGAVDAVVA (190 aa)) are enoyl-CoA hydratase/isomerase. Residue Asp-297 coordinates substrate. The tract at residues 312 to 715 (RDVKQAAVLG…MAKNGQSFFG (404 aa)) is 3-hydroxyacyl-CoA dehydrogenase. NAD(+) contacts are provided by residues Met-325, Asp-344, 401–403 (VVE), Lys-408, and Ser-430. Residue His-451 is the For 3-hydroxyacyl-CoA dehydrogenase activity of the active site. Asn-454 is a binding site for NAD(+). Residues Asn-501 and Tyr-660 each coordinate substrate.

It in the N-terminal section; belongs to the enoyl-CoA hydratase/isomerase family. The protein in the C-terminal section; belongs to the 3-hydroxyacyl-CoA dehydrogenase family. As to quaternary structure, heterotetramer of two alpha chains (FadB) and two beta chains (FadA).

It catalyses the reaction a (3S)-3-hydroxyacyl-CoA + NAD(+) = a 3-oxoacyl-CoA + NADH + H(+). It carries out the reaction a (3S)-3-hydroxyacyl-CoA = a (2E)-enoyl-CoA + H2O. The enzyme catalyses a 4-saturated-(3S)-3-hydroxyacyl-CoA = a (3E)-enoyl-CoA + H2O. The catalysed reaction is (3S)-3-hydroxybutanoyl-CoA = (3R)-3-hydroxybutanoyl-CoA. It catalyses the reaction a (3Z)-enoyl-CoA = a 4-saturated (2E)-enoyl-CoA. It carries out the reaction a (3E)-enoyl-CoA = a 4-saturated (2E)-enoyl-CoA. The protein operates within lipid metabolism; fatty acid beta-oxidation. Functionally, involved in the aerobic and anaerobic degradation of long-chain fatty acids via beta-oxidation cycle. Catalyzes the formation of 3-oxoacyl-CoA from enoyl-CoA via L-3-hydroxyacyl-CoA. It can also use D-3-hydroxyacyl-CoA and cis-3-enoyl-CoA as substrate. The chain is Fatty acid oxidation complex subunit alpha from Pseudomonas fluorescens (strain SBW25).